The primary structure comprises 337 residues: Leucine-rich repeat-containing protein 39 (337 aa).

LRR repeat units lie at residues 84–105, 107–128, 130–152, 153–176, 177–198, 200–221, 223–244, 246–267, and 269–290; these read QLQE…IGRF, HLIV…IGLL, RLQE…SNCT, SLEK…SKLL, KLTH…VLDM, ALEW…LDRM, SLHT…IKNM, NLGT…MEEM, and NLRF…PPSD.

In terms of assembly, interacts with MYH7 (via C-terminus). As to expression, expressed in heart and skeletal muscle.

The protein resides in the cytoplasm. Its subcellular location is the myofibril. The protein localises to the sarcomere. It localises to the m line. Component of the sarcomeric M-band which plays a role in myocyte response to biomechanical stress. May regulate expression of other M-band proteins via an SRF-dependent pathway. Important for normal contractile function in heart. This Mus musculus (Mouse) protein is Leucine-rich repeat-containing protein 39.